Here is a 112-residue protein sequence, read N- to C-terminus: cAMP-regulated phosphoprotein 19 (112 aa).

Methionine 1 carries the N-acetylmethionine modification. A compositionally biased stretch (low complexity) spans 1–11 (MSAEVPEAASA). Residues 1 to 49 (MSAEVPEAASAEEQKEMEDKVTSPEKAEEAKLKARYPHLGQKPGGSDFL) are disordered. Serine 2 is subject to N-acetylserine. Residues serine 2 and serine 23 each carry the phosphoserine modification. Positions 12–32 (EEQKEMEDKVTSPEKAEEAKL) are enriched in basic and acidic residues. A phosphoserine; by GWL mark is found at serine 62 and serine 104. The tract at residues 73–112 (KNKQLPTAAPDKTEVTGDHIPTPQDLPQRKPSLVASKLAG) is disordered. Phosphoserine; by PKA is present on serine 104. N6-acetyllysine is present on lysine 109.

It belongs to the endosulfine family. As to quaternary structure, interacts (when phosphorylated at Ser-62) with PPP2R2D. Interacts with SNCA. Interacts with PPP2R2A; the interaction is direct and this interaction inhibits PP2A activity. In terms of processing, phosphorylation at Ser-62 by MASTL/GWL during mitosis is essential for interaction with PPP2R2D (PR55-delta) and subsequent inactivation of PP2A. Phosphorylated by PKA.

The protein resides in the cytoplasm. Functionally, protein phosphatase inhibitor that specifically inhibits protein phosphatase 2A (PP2A) during mitosis. Inhibition of PP2A is enhanced when ARPP19 is phosphorylated. When phosphorylated at Ser-62 during mitosis, specifically interacts with PPP2R2D (PR55-delta) and inhibits its activity, leading to inactivation of PP2A, an essential condition to keep cyclin-B1-CDK1 activity high during M phase. May indirectly enhance GAP-43 expression. In Homo sapiens (Human), this protein is cAMP-regulated phosphoprotein 19 (ARPP19).